The sequence spans 409 residues: WW domain-containing oxidoreductase (409 aa).

The interval 1 to 23 (MIALPDTDSEDELPPGWEERATD) is disordered. WW domains are found at residues 11–44 (DELP…HPRT) and 52–86 (GELP…DPRL). 128–134 (GANCGIG) is an NADP(+) binding site. S257 is a binding site for substrate. The active-site Proton acceptor is Y288.

The protein belongs to the short-chain dehydrogenases/reductases (SDR) family.

The protein localises to the cytoplasm. Its subcellular location is the mitochondrion. The protein resides in the golgi apparatus. It is found in the lysosome. Functionally, putative oxidoreductase. May control genotoxic stress-induced cell death. May play a role in TGFB1 signaling and TGFB1-mediated cell death. May also play a role in tumor necrosis factor (TNF)-mediated cell death. May play a role in Wnt signaling. The chain is WW domain-containing oxidoreductase (Wwox) from Drosophila melanogaster (Fruit fly).